The following is a 70-amino-acid chain: MPGIKVREGDAFDEAYRRFKKQTDRNLVVTECRARRFFESKTEKRKKQKISAKKKVLKRLYMLRRYESRL.

The protein belongs to the bacterial ribosomal protein bS21 family.

In Helicobacter pylori (strain P12), this protein is Small ribosomal subunit protein bS21.